We begin with the raw amino-acid sequence, 408 residues long: GDSL esterase/lipase At1g54790 (408 aa).

A signal peptide spans 1–24 (MNITKMKLFYVILFFISSLQISNS). Ser38 serves as the catalytic Nucleophile. Residues Asn273, Asn289, and Asn361 are each glycosylated (N-linked (GlcNAc...) asparagine). Residues Asp370 and His373 contribute to the active site.

Belongs to the 'GDSL' lipolytic enzyme family.

Its subcellular location is the secreted. This Arabidopsis thaliana (Mouse-ear cress) protein is GDSL esterase/lipase At1g54790.